Reading from the N-terminus, the 334-residue chain is Protein-methionine-sulfoxide reductase catalytic subunit MsrP (334 aa).

The tat-type signal signal peptide spans 1–44 (MKKVSRLTEADVTAESAFFMQRRQVLKALGITTAALSLPTAAHA). Mo-molybdopterin is bound by residues Asn-88, 91–92 (YE), Cys-146, Thr-181, Asn-233, Arg-238, and 249–251 (GIK).

Belongs to the MsrP family. In terms of assembly, heterodimer of a catalytic subunit (MsrP) and a heme-binding subunit (MsrQ). Mo-molybdopterin is required as a cofactor. In terms of processing, predicted to be exported by the Tat system. The position of the signal peptide cleavage has not been experimentally proven.

The protein localises to the periplasm. It catalyses the reaction L-methionyl-[protein] + a quinone + H2O = L-methionyl-(S)-S-oxide-[protein] + a quinol. The catalysed reaction is L-methionyl-[protein] + a quinone + H2O = L-methionyl-(R)-S-oxide-[protein] + a quinol. Its function is as follows. Part of the MsrPQ system that repairs oxidized periplasmic proteins containing methionine sulfoxide residues (Met-O), using respiratory chain electrons. Thus protects these proteins from oxidative-stress damage caused by reactive species of oxygen and chlorine generated by the host defense mechanisms. MsrPQ is essential for the maintenance of envelope integrity under bleach stress, rescuing a wide series of structurally unrelated periplasmic proteins from methionine oxidation. The catalytic subunit MsrP is non-stereospecific, being able to reduce both (R-) and (S-) diastereoisomers of methionine sulfoxide. This is Protein-methionine-sulfoxide reductase catalytic subunit MsrP from Cronobacter sakazakii (strain ATCC BAA-894) (Enterobacter sakazakii).